Consider the following 483-residue polypeptide: Aspartyl/glutamyl-tRNA(Asn/Gln) amidotransferase subunit B (483 aa).

The protein belongs to the GatB/GatE family. GatB subfamily. As to quaternary structure, heterotrimer of A, B and C subunits.

The enzyme catalyses L-glutamyl-tRNA(Gln) + L-glutamine + ATP + H2O = L-glutaminyl-tRNA(Gln) + L-glutamate + ADP + phosphate + H(+). It catalyses the reaction L-aspartyl-tRNA(Asn) + L-glutamine + ATP + H2O = L-asparaginyl-tRNA(Asn) + L-glutamate + ADP + phosphate + 2 H(+). Allows the formation of correctly charged Asn-tRNA(Asn) or Gln-tRNA(Gln) through the transamidation of misacylated Asp-tRNA(Asn) or Glu-tRNA(Gln) in organisms which lack either or both of asparaginyl-tRNA or glutaminyl-tRNA synthetases. The reaction takes place in the presence of glutamine and ATP through an activated phospho-Asp-tRNA(Asn) or phospho-Glu-tRNA(Gln). This is Aspartyl/glutamyl-tRNA(Asn/Gln) amidotransferase subunit B from Lachnospira eligens (strain ATCC 27750 / DSM 3376 / VPI C15-48 / C15-B4) (Eubacterium eligens).